Here is a 398-residue protein sequence, read N- to C-terminus: Elongation factor Tu (398 aa).

The tr-type G domain maps to 10–207 (KPHVNIGTIG…TVDSYIPEPE (198 aa)). The tract at residues 19–26 (GHVDHGKT) is G1. 19 to 26 (GHVDHGKT) lines the GTP pocket. Threonine 26 provides a ligand contact to Mg(2+). The G2 stretch occupies residues 63 to 67 (GITIN). The segment at 84 to 87 (DAPG) is G3. GTP-binding positions include 84 to 88 (DAPGH) and 139 to 142 (NKVD). Residues 139–142 (NKVD) form a G4 region. The tract at residues 177 to 179 (SAL) is G5.

It belongs to the TRAFAC class translation factor GTPase superfamily. Classic translation factor GTPase family. EF-Tu/EF-1A subfamily. Monomer.

It is found in the cytoplasm. It carries out the reaction GTP + H2O = GDP + phosphate + H(+). Its function is as follows. GTP hydrolase that promotes the GTP-dependent binding of aminoacyl-tRNA to the A-site of ribosomes during protein biosynthesis. In Streptococcus pyogenes serotype M1, this protein is Elongation factor Tu.